A 464-amino-acid polypeptide reads, in one-letter code: Cytoplasmic tRNA 2-thiolation protein 2 (464 aa).

It belongs to the CTU2/NCS2 family.

The protein localises to the cytoplasm. Its pathway is tRNA modification; 5-methoxycarbonylmethyl-2-thiouridine-tRNA biosynthesis. Its function is as follows. Plays a central role in 2-thiolation of mcm(5)S(2)U at tRNA wobble positions of tRNA(Lys), tRNA(Glu) and tRNA(Gln). May act by forming a heterodimer with NCS6/CTU1 that ligates sulfur from thiocarboxylated URM1 onto the uridine of tRNAs at wobble position. This chain is Cytoplasmic tRNA 2-thiolation protein 2, found in Oryza sativa subsp. japonica (Rice).